The primary structure comprises 237 residues: MRPSNRTPAQSRPVTITRQFTAHAEGSVLVEFGDTKVLCTASFEEGVPRFLKGQGQGWVTAEYGMLPRSTHSRMQREAARGKQSGRTQEIQRLIGRSLRAAVDMKLLGENTIVIDCDVIQADGGTRTAAITGACVALVDALNWARGKGILKTNPLKFLIAAVSVGIYKGEPICDLEYIEDSAAETDMNVVMTETGKIIEIQGTAEGEPFSHEELLSLLDLAKHGIREIVDIQKASLS.

Phosphate is bound by residues Arg86 and 124 to 126 (GTR).

It belongs to the RNase PH family. As to quaternary structure, homohexameric ring arranged as a trimer of dimers.

It carries out the reaction tRNA(n+1) + phosphate = tRNA(n) + a ribonucleoside 5'-diphosphate. Its function is as follows. Phosphorolytic 3'-5' exoribonuclease that plays an important role in tRNA 3'-end maturation. Removes nucleotide residues following the 3'-CCA terminus of tRNAs; can also add nucleotides to the ends of RNA molecules by using nucleoside diphosphates as substrates, but this may not be physiologically important. Probably plays a role in initiation of 16S rRNA degradation (leading to ribosome degradation) during starvation. This chain is Ribonuclease PH, found in Shewanella pealeana (strain ATCC 700345 / ANG-SQ1).